The following is a 365-amino-acid chain: MNAQAMDPQQYEQQLEQKCQALTEAFAHYNPPALEVFPSAPAHYRMRCEFRVWHDGDDLYYCMFDNVAKEKVRTDQFLPASELINRMMPALLDELRPNRALRHKLFQVDFLSTLSGEILVSLLYHRQLDDQWLTEARALKARLGEHFKVDIIGRARKQKFVLDRDFVVESLDVDGKTLHYKQVENSFTQPNAGVAVKMLEWALDATKQSSGDLLELYCGNGNFSIALAPNFGKVLATELAKPSVEAAQYNIQVNKVSNLDIVRMSAEEFTEAMKGEKRFNRLGDIDLQSYQCNTIFVDPPRAGLDDETVKLVQGYENILYISCNPDTLNDNLKVLSETHEVVRFALFDQFPYTHHTEAGVMLKRR.

S-adenosyl-L-methionine contacts are provided by Gln-189, Tyr-217, Asn-222, Glu-238, and Asp-298. The active-site Nucleophile is Cys-323. Glu-357 serves as the catalytic Proton acceptor.

The protein belongs to the class I-like SAM-binding methyltransferase superfamily. RNA M5U methyltransferase family. TrmA subfamily.

The enzyme catalyses uridine(54) in tRNA + S-adenosyl-L-methionine = 5-methyluridine(54) in tRNA + S-adenosyl-L-homocysteine + H(+). The catalysed reaction is uridine(341) in tmRNA + S-adenosyl-L-methionine = 5-methyluridine(341) in tmRNA + S-adenosyl-L-homocysteine + H(+). Dual-specificity methyltransferase that catalyzes the formation of 5-methyluridine at position 54 (m5U54) in all tRNAs, and that of position 341 (m5U341) in tmRNA (transfer-mRNA). This chain is tRNA/tmRNA (uracil-C(5))-methyltransferase, found in Shewanella amazonensis (strain ATCC BAA-1098 / SB2B).